A 747-amino-acid polypeptide reads, in one-letter code: uncharacterized protein (747 aa).

The helical transmembrane segment at 7-27 (FFLKVISVIAPIVIIPTILAN) threads the bilayer.

The protein localises to the membrane. This is an uncharacterized protein from Ureaplasma parvum serovar 3 (strain ATCC 700970).